The following is a 494-amino-acid chain: PIGF/3-ketodihydrosphingosine reductase fusion protein (494 aa).

NADPH-binding residues include Gly-20, Ser-22, and Gly-24. Positions 20 to 24 (GGSQG) match the GXSXG motif. Leu-25 serves as a coordination point for NADP(+). Residues Arg-45 and Lys-49 each contribute to the NADPH site. Position 54 (Val-54) interacts with NADP(+). Positions 74 and 75 each coordinate NADPH. A helical transmembrane segment spans residues 148–168 (ILLVGSLLSSLPIIGYSAYSP). NADP(+) contacts are provided by Tyr-166, Lys-170, and Ile-199. Tyr-166 serves as the catalytic Proton acceptor. Lys-170 serves as the catalytic Lowers pKa of active site Tyr. The next 6 membrane-spanning stretches (helical) occupy residues 264–284 (HDNPILEYLFALVSLLAWPFY), 312–332 (IFTLLLTFTQLTIFYLSLNCL), 370–390 (LAGAASMLIGSLLISFILVAF), 402–422 (YFCALTLSVFTVYPLASTLAF), 444–464 (LRSWGPIIGAWFGAFPIPLDW), and 473–493 (ITIVIGAFLGYAFAAIVGEIL).

It in the N-terminal section; belongs to the short-chain dehydrogenases/reductases (SDR) family. In the C-terminal section; belongs to the PIGF family.

It localises to the endoplasmic reticulum membrane. It catalyses the reaction sphinganine + NADP(+) = 3-oxosphinganine + NADPH + H(+). It participates in glycolipid biosynthesis; glycosylphosphatidylinositol-anchor biosynthesis. Its pathway is lipid metabolism; sphingolipid metabolism. Functionally, acts in the GPI biosynthetic pathway between GlcNAc-PI synthesis and GPI transfer to protein. Required for the formation of complete GPI precursors CP1 and CP2. In terms of biological role, catalyzes the reduction of 3'-oxosphinganine (3-ketodihydrosphingosine/KDS) to sphinganine (dihydrosphingosine/DHS), the second step of de novo sphingolipid biosynthesis. The chain is PIGF/3-ketodihydrosphingosine reductase fusion protein from Schizosaccharomyces pombe (strain 972 / ATCC 24843) (Fission yeast).